We begin with the raw amino-acid sequence, 1486 residues long: Chromosome partition protein MukB (1486 aa).

ATP is bound at residue 34–41 (GGNGAGKS). Coiled-coil stretches lie at residues 326 to 418 (LEAD…QYNQ), 444 to 480 (LETF…QAYQ), and 509 to 603 (RHLA…RAPV). A flexible hinge region spans residues 666–783 (PGGSEDQRLN…EVPLFGRAAR (118 aa)). Coiled coils occupy residues 835–923 (EAEI…AKLE), 977–1115 (EMLS…TAKA), and 1209–1266 (VEAI…QNVS).

Belongs to the SMC family. MukB subfamily. In terms of assembly, homodimerization via its hinge domain. Binds to DNA via its C-terminal region. Interacts, and probably forms a ternary complex, with MukE and MukF via its C-terminal region. The complex formation is stimulated by calcium or magnesium. Interacts with tubulin-related protein FtsZ.

It is found in the cytoplasm. It localises to the nucleoid. Its function is as follows. Plays a central role in chromosome condensation, segregation and cell cycle progression. Functions as a homodimer, which is essential for chromosome partition. Involved in negative DNA supercoiling in vivo, and by this means organize and compact chromosomes. May achieve or facilitate chromosome segregation by condensation DNA from both sides of a centrally located replisome during cell division. This is Chromosome partition protein MukB from Escherichia coli O9:H4 (strain HS).